The sequence spans 236 residues: Purine nucleoside phosphorylase DeoD-type (236 aa).

A purine D-ribonucleoside is bound at residue His5. Phosphate is bound by residues Gly21, Arg25, Arg44, and 88-91; that span reads RVGT. A purine D-ribonucleoside is bound by residues 180–182 and 204–205; these read EME and SD. Asp205 functions as the Proton donor in the catalytic mechanism.

The protein belongs to the PNP/UDP phosphorylase family. As to quaternary structure, homohexamer; trimer of homodimers.

The catalysed reaction is a purine D-ribonucleoside + phosphate = a purine nucleobase + alpha-D-ribose 1-phosphate. The enzyme catalyses a purine 2'-deoxy-D-ribonucleoside + phosphate = a purine nucleobase + 2-deoxy-alpha-D-ribose 1-phosphate. In terms of biological role, catalyzes the reversible phosphorolytic breakdown of the N-glycosidic bond in the beta-(deoxy)ribonucleoside molecules, with the formation of the corresponding free purine bases and pentose-1-phosphate. The sequence is that of Purine nucleoside phosphorylase DeoD-type from Shewanella sp. (strain MR-4).